Consider the following 258-residue polypeptide: Protein U52 (258 aa).

The protein belongs to the herpesviridae UL79 family.

This Human herpesvirus 6B (strain Z29) (HHV-6 variant B) protein is Protein U52 (U52).